A 116-amino-acid polypeptide reads, in one-letter code: Large ribosomal subunit protein bL20 (116 aa).

The protein belongs to the bacterial ribosomal protein bL20 family.

Binds directly to 23S ribosomal RNA and is necessary for the in vitro assembly process of the 50S ribosomal subunit. It is not involved in the protein synthesizing functions of that subunit. The chain is Large ribosomal subunit protein bL20 from Helicobacter acinonychis (strain Sheeba).